The sequence spans 440 residues: Protein arginine N-methyltransferase 2 (440 aa).

The segment at 147–194 (LSSGSEDGDEEMEVQQDDDEEAPQLVSTEDVEPTVEEPKFIPPDAKEK) is disordered. Residues 152 to 168 (EDGDEEMEVQQDDDEEA) show a composition bias toward acidic residues. Residues 182–194 (EEPKFIPPDAKEK) are compositionally biased toward basic and acidic residues. The RMT2 domain occupies 192 to 440 (KEKQVTSEEY…RYAVGTSNRL (249 aa)). Residues Tyr-201, Met-230, 252–257 (FGMGIV), 273–275 (EAH), 310–311 (WQ), and Asp-330 each bind S-adenosyl-L-methionine.

The protein belongs to the class I-like SAM-binding methyltransferase superfamily. RMT2 methyltransferase family. As to quaternary structure, monomer.

It is found in the cytoplasm. The protein resides in the nucleus. Functionally, S-adenosyl-L-methionine-dependent protein-arginine N-methyltransferase that methylates the delta-nitrogen atom of arginine residues to form N5-methylarginine (type IV) in target proteins. Monomethylates ribosomal protein L12. In Gibberella zeae (strain ATCC MYA-4620 / CBS 123657 / FGSC 9075 / NRRL 31084 / PH-1) (Wheat head blight fungus), this protein is Protein arginine N-methyltransferase 2.